Reading from the N-terminus, the 56-residue chain is Endoregulin (56 aa).

The helical transmembrane segment at 25-45 (LTVIGLFTSTFLLFVLFAVVF) threads the bilayer.

As to quaternary structure, homooligomer. Can also form heterooligomers with other sarcoplasmic/endoplasmic reticulum calcium ATPase (SERCA) regulators ARLN, PLN, SLN and STRIT1/DWORF. Monomer. Interacts as a monomer with ATP2A2/SERCA2; the interaction results in inhibition of ATP2A2 Ca(2+) affinity. Largely expressed in non-muscle tissues with the exception of weak expression in body wall muscles at 14.5 dpc. Expressed in epithelial cells of the trachea, bronchus, lung, intestine, pancreas, and liver.

It is found in the endoplasmic reticulum membrane. Functionally, inhibits the activity of the calcium ATPases ATP2A2/SERCA2 and ATP2A3/SERCA3 by decreasing their apparent affinity for Ca(2+). This is Endoregulin (Erln) from Mus musculus (Mouse).